The primary structure comprises 266 residues: Lipooligosaccharide biosynthesis protein lic2B (266 aa).

This sequence belongs to the glycosyltransferase 25 family.

Functionally, involved in extracellular lipooligosaccharide (LOS) biosynthesis and virulence expression. Involved in the synthesis of the oligosaccharide moiety of the LOS molecule by adding GalNAc. In Haemophilus influenzae, this protein is Lipooligosaccharide biosynthesis protein lic2B (lic2B).